The chain runs to 327 residues: Transaldolase (327 aa).

Lys-132 functions as the Schiff-base intermediate with substrate in the catalytic mechanism.

This sequence belongs to the transaldolase family. Type 1 subfamily. In terms of assembly, homodimer.

Its subcellular location is the cytoplasm. It carries out the reaction D-sedoheptulose 7-phosphate + D-glyceraldehyde 3-phosphate = D-erythrose 4-phosphate + beta-D-fructose 6-phosphate. It functions in the pathway carbohydrate degradation; pentose phosphate pathway; D-glyceraldehyde 3-phosphate and beta-D-fructose 6-phosphate from D-ribose 5-phosphate and D-xylulose 5-phosphate (non-oxidative stage): step 2/3. Transaldolase is important for the balance of metabolites in the pentose-phosphate pathway. The chain is Transaldolase from Chlamydia caviae (strain ATCC VR-813 / DSM 19441 / 03DC25 / GPIC) (Chlamydophila caviae).